Consider the following 569-residue polypeptide: Sulfite reductase [NADPH] hemoprotein beta-component (569 aa).

[4Fe-4S] cluster is bound by residues Cys433, Cys439, Cys478, and Cys482. Siroheme is bound at residue Cys482.

Belongs to the nitrite and sulfite reductase 4Fe-4S domain family. As to quaternary structure, alpha(8)-beta(8). The alpha component is a flavoprotein, the beta component is a hemoprotein. Siroheme serves as cofactor. It depends on [4Fe-4S] cluster as a cofactor.

It carries out the reaction hydrogen sulfide + 3 NADP(+) + 3 H2O = sulfite + 3 NADPH + 4 H(+). It participates in sulfur metabolism; hydrogen sulfide biosynthesis; hydrogen sulfide from sulfite (NADPH route): step 1/1. In terms of biological role, component of the sulfite reductase complex that catalyzes the 6-electron reduction of sulfite to sulfide. This is one of several activities required for the biosynthesis of L-cysteine from sulfate. In Pseudoalteromonas atlantica (strain T6c / ATCC BAA-1087), this protein is Sulfite reductase [NADPH] hemoprotein beta-component.